The sequence spans 308 residues: tRNA dimethylallyltransferase (308 aa).

Residue 16–23 (GPTASGKT) participates in ATP binding. Residue 18 to 23 (TASGKT) coordinates substrate. The tract at residues 41 to 44 (DSQQ) is interaction with substrate tRNA.

The protein belongs to the IPP transferase family. As to quaternary structure, monomer. Mg(2+) is required as a cofactor.

The catalysed reaction is adenosine(37) in tRNA + dimethylallyl diphosphate = N(6)-dimethylallyladenosine(37) in tRNA + diphosphate. Its function is as follows. Catalyzes the transfer of a dimethylallyl group onto the adenine at position 37 in tRNAs that read codons beginning with uridine, leading to the formation of N6-(dimethylallyl)adenosine (i(6)A). In Myxococcus xanthus (strain DK1622), this protein is tRNA dimethylallyltransferase.